The following is a 478-amino-acid chain: Cytochrome c-552 (478 aa).

An N-terminal signal peptide occupies residues 1–27; the sequence is MKKQWTRRSAAAIAMVTTLLLSSHSFA. Residue histidine 91 participates in heme c binding. The heme site is built by cysteine 119, cysteine 122, and lysine 123. 6 residues coordinate heme c: cysteine 157, cysteine 160, histidine 161, cysteine 206, cysteine 209, and histidine 210. The Ca(2+) site is built by glutamate 212, tyrosine 213, lysine 258, and glutamine 260. Tyrosine 213 contacts substrate. Histidine 261 is a substrate binding site. Histidine 272, cysteine 279, cysteine 282, histidine 283, histidine 298, cysteine 311, cysteine 314, histidine 315, and histidine 390 together coordinate heme c.

Belongs to the cytochrome c-552 family. Ca(2+) serves as cofactor. It depends on heme c as a cofactor.

The protein localises to the periplasm. The enzyme catalyses 6 Fe(III)-[cytochrome c] + NH4(+) + 2 H2O = 6 Fe(II)-[cytochrome c] + nitrite + 8 H(+). It functions in the pathway nitrogen metabolism; nitrate reduction (assimilation). In terms of biological role, catalyzes the reduction of nitrite to ammonia, consuming six electrons in the process. The chain is Cytochrome c-552 from Aliivibrio fischeri (strain ATCC 700601 / ES114) (Vibrio fischeri).